Here is a 72-residue protein sequence, read N- to C-terminus: Translation initiation factor IF-1 (72 aa).

Positions 1-72 (MAGNDVIEIE…TKGRITYRHK (72 aa)) constitute an S1-like domain.

The protein belongs to the IF-1 family. Component of the 30S ribosomal translation pre-initiation complex which assembles on the 30S ribosome in the order IF-2 and IF-3, IF-1 and N-formylmethionyl-tRNA(fMet); mRNA recruitment can occur at any time during PIC assembly.

It is found in the cytoplasm. In terms of biological role, one of the essential components for the initiation of protein synthesis. Stabilizes the binding of IF-2 and IF-3 on the 30S subunit to which N-formylmethionyl-tRNA(fMet) subsequently binds. Helps modulate mRNA selection, yielding the 30S pre-initiation complex (PIC). Upon addition of the 50S ribosomal subunit IF-1, IF-2 and IF-3 are released leaving the mature 70S translation initiation complex. The sequence is that of Translation initiation factor IF-1 from Oenococcus oeni (strain ATCC BAA-331 / PSU-1).